The chain runs to 109 residues: Small ribosomal subunit protein eS25 (109 aa).

Basic and acidic residues predominate over residues 1–13; it reads MVKKIQESKEKKA. Residues 1 to 34 are disordered; sequence MVKKIQESKEKKALKAASGTRKDKKKWGDGRKKE.

Belongs to the eukaryotic ribosomal protein eS25 family.

The sequence is that of Small ribosomal subunit protein eS25 (RPS25-1) from Encephalitozoon cuniculi (strain GB-M1) (Microsporidian parasite).